We begin with the raw amino-acid sequence, 57 residues long: uncharacterized protein (57 aa).

Proetin of unknown function whose overexpression causes growth inhibition. Overexpression increases the expression of ergosterol synthesis genes. This is an uncharacterized protein from Saccharomyces cerevisiae (strain ATCC 204508 / S288c) (Baker's yeast).